Reading from the N-terminus, the 372-residue chain is Aminomethyltransferase (372 aa).

The protein belongs to the GcvT family. As to quaternary structure, the glycine cleavage system is composed of four proteins: P, T, L and H.

It catalyses the reaction N(6)-[(R)-S(8)-aminomethyldihydrolipoyl]-L-lysyl-[protein] + (6S)-5,6,7,8-tetrahydrofolate = N(6)-[(R)-dihydrolipoyl]-L-lysyl-[protein] + (6R)-5,10-methylene-5,6,7,8-tetrahydrofolate + NH4(+). Its function is as follows. The glycine cleavage system catalyzes the degradation of glycine. This Paraburkholderia phymatum (strain DSM 17167 / CIP 108236 / LMG 21445 / STM815) (Burkholderia phymatum) protein is Aminomethyltransferase.